A 247-amino-acid chain; its full sequence is tRNA pseudouridine synthase A (247 aa).

Catalysis depends on D52, which acts as the Nucleophile. Y113 contacts substrate.

This sequence belongs to the tRNA pseudouridine synthase TruA family. Homodimer.

The enzyme catalyses uridine(38/39/40) in tRNA = pseudouridine(38/39/40) in tRNA. Functionally, formation of pseudouridine at positions 38, 39 and 40 in the anticodon stem and loop of transfer RNAs. The protein is tRNA pseudouridine synthase A of Sinorhizobium medicae (strain WSM419) (Ensifer medicae).